The primary structure comprises 116 residues: Iron-sulfur cluster insertion protein ErpA (116 aa).

Cys-44, Cys-108, and Cys-110 together coordinate iron-sulfur cluster.

This sequence belongs to the HesB/IscA family. In terms of assembly, homodimer. Requires iron-sulfur cluster as cofactor.

In terms of biological role, required for insertion of 4Fe-4S clusters for at least IspG. The chain is Iron-sulfur cluster insertion protein ErpA from Pseudomonas putida (strain ATCC 47054 / DSM 6125 / CFBP 8728 / NCIMB 11950 / KT2440).